Consider the following 435-residue polypeptide: GTPase Der (435 aa).

EngA-type G domains are found at residues 8 to 169 (NLVA…NFEN) and 176 to 351 (FKIA…NNLS). GTP-binding positions include 14-21 (GKPNVGKS), 61-65 (DTGGI), 123-126 (NKLD), 182-189 (GKPNAGKS), 229-233 (DTAGI), and 294-297 (NKWD). The KH-like domain maps to 352–435 (REIKQNLLND…PINLVLKKNK (84 aa)).

It belongs to the TRAFAC class TrmE-Era-EngA-EngB-Septin-like GTPase superfamily. EngA (Der) GTPase family. As to quaternary structure, associates with the 50S ribosomal subunit.

Functionally, GTPase that plays an essential role in the late steps of ribosome biogenesis. The polypeptide is GTPase Der (Mycoplasmopsis pulmonis (strain UAB CTIP) (Mycoplasma pulmonis)).